Reading from the N-terminus, the 147-residue chain is uncharacterized protein (147 aa).

The region spanning 7–147 (LEINYKTDEL…GHDVLVWAPK (141 aa)) is the N-acetyltransferase domain.

This is an uncharacterized protein from Staphylococcus haemolyticus (strain JCSC1435).